The primary structure comprises 295 residues: Acetylglutamate kinase (295 aa).

Substrate-binding positions include 66–67 (GG), Arg-88, and Asn-193.

This sequence belongs to the acetylglutamate kinase family. ArgB subfamily.

It localises to the cytoplasm. It carries out the reaction N-acetyl-L-glutamate + ATP = N-acetyl-L-glutamyl 5-phosphate + ADP. It functions in the pathway amino-acid biosynthesis; L-arginine biosynthesis; N(2)-acetyl-L-ornithine from L-glutamate: step 2/4. Functionally, catalyzes the ATP-dependent phosphorylation of N-acetyl-L-glutamate. The protein is Acetylglutamate kinase of Allorhizobium ampelinum (strain ATCC BAA-846 / DSM 112012 / S4) (Agrobacterium vitis (strain S4)).